The chain runs to 518 residues: Filamentous growth regulator 15 (518 aa).

Residues Met1–Asn41 show a composition bias toward polar residues. 3 disordered regions span residues Met1–Arg63, Val75–Lys101, and Lys261–Arg307. Positions Gln42 to Gln52 are enriched in low complexity. Residues Pro77–Val95 show a composition bias toward polar residues. Positions Ser262–Val274 are enriched in basic residues. Residues Ser283 to Asn298 are compositionally biased toward low complexity. Residues His374 to His406 form a C2H2-type zinc finger. The interval Arg492–Lys518 is disordered. The span at Ser505–Lys518 shows a compositional bias: acidic residues.

It is found in the nucleus. Probable transcription factor involved in the regulation of filamentous growth. In Candida albicans (strain SC5314 / ATCC MYA-2876) (Yeast), this protein is Filamentous growth regulator 15 (FGR15).